Here is a 129-residue protein sequence, read N- to C-terminus: Ribonuclease P protein component (129 aa).

It belongs to the RnpA family. In terms of assembly, consists of a catalytic RNA component (M1 or rnpB) and a protein subunit.

It carries out the reaction Endonucleolytic cleavage of RNA, removing 5'-extranucleotides from tRNA precursor.. In terms of biological role, RNaseP catalyzes the removal of the 5'-leader sequence from pre-tRNA to produce the mature 5'-terminus. It can also cleave other RNA substrates such as 4.5S RNA. The protein component plays an auxiliary but essential role in vivo by binding to the 5'-leader sequence and broadening the substrate specificity of the ribozyme. The polypeptide is Ribonuclease P protein component (Prochlorococcus marinus (strain MIT 9515)).